A 185-amino-acid chain; its full sequence is Putative manganese efflux pump MntP (185 aa).

The next 6 helical transmembrane spans lie at 4–24, 43–63, 67–87, 107–127, 131–151, and 165–185; these read LLLS…SVSL, IFFG…GVPI, IDPF…GKMI, LLLA…FALI, VLLP…FGVL, and QILG…EYCL.

This sequence belongs to the MntP (TC 9.B.29) family.

It localises to the cell membrane. In terms of biological role, probably functions as a manganese efflux pump. In Methanocorpusculum labreanum (strain ATCC 43576 / DSM 4855 / Z), this protein is Putative manganese efflux pump MntP.